A 171-amino-acid chain; its full sequence is Endoribonuclease YbeY (171 aa).

Positions 126, 130, and 136 each coordinate Zn(2+).

It belongs to the endoribonuclease YbeY family. Requires Zn(2+) as cofactor.

It localises to the cytoplasm. In terms of biological role, single strand-specific metallo-endoribonuclease involved in late-stage 70S ribosome quality control and in maturation of the 3' terminus of the 16S rRNA. This chain is Endoribonuclease YbeY, found in Rhizobium leguminosarum bv. trifolii (strain WSM2304).